A 465-amino-acid chain; its full sequence is Dihydrolipoyllysine-residue acetyltransferase component 5 of pyruvate dehydrogenase complex, chloroplastic (465 aa).

A chloroplast-targeting transit peptide spans 1–31 (MSRLLQTPFLPSVSLPTKTRSSVTGFRVKPR). A Lipoyl-binding domain is found at 39–114 (IREIFMPALS…PVGSAIALLA (76 aa)). Residue Lys80 is modified to N6-lipoyllysine. A disordered region spans residues 123–148 (AKAKASGGGGGGDSKAPPASPPTAAV). The span at 136–148 (SKAPPASPPTAAV) shows a compositional bias: low complexity. A Peripheral subunit-binding (PSBD) domain is found at 184 to 221 (VASPYAKKLAKELKVELAGLVGSGPMGRIVAKDVEAVA). His438 is a catalytic residue.

It belongs to the 2-oxoacid dehydrogenase family. Requires (R)-lipoate as cofactor.

Its subcellular location is the plastid. The protein resides in the chloroplast stroma. The enzyme catalyses N(6)-[(R)-dihydrolipoyl]-L-lysyl-[protein] + acetyl-CoA = N(6)-[(R)-S(8)-acetyldihydrolipoyl]-L-lysyl-[protein] + CoA. In terms of biological role, the pyruvate dehydrogenase complex catalyzes the overall conversion of pyruvate to acetyl-CoA and CO(2). It contains multiple copies of three enzymatic components: pyruvate dehydrogenase (E1), dihydrolipoamide acetyltransferase (E2) and lipoamide dehydrogenase (E3). This is Dihydrolipoyllysine-residue acetyltransferase component 5 of pyruvate dehydrogenase complex, chloroplastic (EMB3003) from Arabidopsis thaliana (Mouse-ear cress).